Reading from the N-terminus, the 398-residue chain is Na(+)/H(+) antiporter NhaA (398 aa).

The next 11 helical transmembrane spans lie at 19–39 (IGGI…NSPG), 64–84 (LLLW…GLEL), 99–119 (IILP…IYLA), 130–150 (GWAI…SLLG), 159–179 (ILLT…IACF), 182–202 (NDIY…LFIV), 222–242 (IAML…AMFI), 266–286 (ATFI…LTNI), 299–319 (IALG…WVGV), 337–357 (GMSA…SLAF), and 370–390 (LGII…LNKT).

The protein belongs to the NhaA Na(+)/H(+) (TC 2.A.33) antiporter family.

It is found in the cell inner membrane. The enzyme catalyses Na(+)(in) + 2 H(+)(out) = Na(+)(out) + 2 H(+)(in). Functionally, na(+)/H(+) antiporter that extrudes sodium in exchange for external protons. This Desulfotalea psychrophila (strain LSv54 / DSM 12343) protein is Na(+)/H(+) antiporter NhaA.